Consider the following 246-residue polypeptide: tRNA pseudouridine synthase A (246 aa).

Catalysis depends on Asp-53, which acts as the Nucleophile. Residue Tyr-112 coordinates substrate.

It belongs to the tRNA pseudouridine synthase TruA family. Homodimer.

It carries out the reaction uridine(38/39/40) in tRNA = pseudouridine(38/39/40) in tRNA. Functionally, formation of pseudouridine at positions 38, 39 and 40 in the anticodon stem and loop of transfer RNAs. This is tRNA pseudouridine synthase A from Anaplasma phagocytophilum (strain HZ).